The chain runs to 105 residues: Replication initiation control protein YabA (105 aa).

Zn(2+) is bound by residues His79, Cys81, Cys95, and Cys98.

It belongs to the YabA family. Homotetramer. Interacts with both DnaA and DnaN, acting as a bridge between these two proteins. Zn(2+) is required as a cofactor.

The protein resides in the cytoplasm. It localises to the nucleoid. Functionally, involved in control of chromosome replication initiation. Inhibits the cooperative binding of DnaA to the oriC region, thus negatively regulating initiation of chromosome replication. Inhibits the ability of DnaA-ATP to form a helix on DNA; does not disassemble preformed DnaA-DNA helices. Decreases the residence time of DnaA on the chromosome at its binding sites (oriC, replication forks and promoter-binding sites). Tethers DnaA to the replication machinery via the DNA polymerase beta sliding clamp subunit (dnaN). Associates with oriC and other DnaA targets on the chromosome in a DnaA-dependent manner. This is Replication initiation control protein YabA from Streptococcus pneumoniae serotype 2 (strain D39 / NCTC 7466).